A 691-amino-acid polypeptide reads, in one-letter code: Ubiquitin-like domain-containing protein CIP73 (691 aa).

Residues Ile-22–Leu-97 enclose the Ubiquitin-like domain. 7 disordered regions span residues Ala-92–Gly-118, Thr-176–Asp-203, Arg-264–Ser-283, Ala-432–Ala-473, Ser-499–Val-554, Glu-590–Val-624, and His-645–Glu-691. 5 stretches are compositionally biased toward polar residues: residues Pro-104–Gly-118, Leu-178–Ser-189, Ser-273–Ser-283, Thr-446–Ser-465, and Ser-499–Glu-523. Over residues Thr-525–Ala-535 the composition is skewed to basic and acidic residues. Polar residues predominate over residues Arg-536–Val-554. The segment covering Ser-597–Ala-617 has biased composition (low complexity).

As to quaternary structure, interacts with CCAMK. Post-translationally, phosphorylated at the N-terminus by CCAMK. In terms of tissue distribution, highly epressed in roots. Expressed at very low levels in leaves and stems.

It is found in the nucleus. Functionally, involved in root nodulation. Required for root nodule organogenesis after infection by symbiotic rhizobia. Probably not involved in arbuscular mycorrhizal (AM) symbiosis. Acts downstream of CCAMK. In Lotus japonicus (Lotus corniculatus var. japonicus), this protein is Ubiquitin-like domain-containing protein CIP73.